The chain runs to 826 residues: Lon protease (826 aa).

Positions leucine 26–valine 221 constitute a Lon N-terminal domain. Residue glycine 373–threonine 380 coordinates ATP. In terms of domain architecture, Lon proteolytic spans glutamate 609–proline 790. Active-site residues include serine 696 and lysine 739. A disordered region spans residues leucine 788–lysine 826. Basic residues predominate over residues alanine 796–proline 816.

The protein belongs to the peptidase S16 family. In terms of assembly, homohexamer. Organized in a ring with a central cavity.

It is found in the cytoplasm. It carries out the reaction Hydrolysis of proteins in presence of ATP.. In terms of biological role, ATP-dependent serine protease that mediates the selective degradation of mutant and abnormal proteins as well as certain short-lived regulatory proteins. Required for cellular homeostasis and for survival from DNA damage and developmental changes induced by stress. Degrades polypeptides processively to yield small peptide fragments that are 5 to 10 amino acids long. Binds to DNA in a double-stranded, site-specific manner. The chain is Lon protease from Desulfatibacillum aliphaticivorans.